Reading from the N-terminus, the 204-residue chain is Ras-related protein Rab-1D (204 aa).

GTP-binding positions include 17 to 25 (GDSGVGKSC), 35 to 42 (WTDTHIST), 65 to 69 (DTAGQ), 123 to 126 (NKTD), and 153 to 155 (SAK). An Effector region motif is present at residues 39 to 47 (HISTIGVDF). Over residues 182–191 (PKPDEVDIKS) the composition is skewed to basic and acidic residues. A disordered region spans residues 182–204 (PKPDEVDIKSKNKTKSGGKKSFC). Basic residues predominate over residues 192-204 (KNKTKSGGKKSFC). Cys204 carries the S-geranylgeranyl cysteine lipid modification.

Belongs to the small GTPase superfamily. Rab family.

It is found in the cell membrane. This chain is Ras-related protein Rab-1D (rab1D), found in Dictyostelium discoideum (Social amoeba).